The following is a 174-amino-acid chain: Tat proofreading chaperone TtrD (174 aa).

This sequence belongs to the TorD/DmsD family. As to quaternary structure, monomer.

The protein localises to the cytoplasm. In terms of biological role, binds specifically to the Tat signal peptide of the TtrA subunit of the tetrathionate reductase. The sequence is that of Tat proofreading chaperone TtrD (ttrD) from Archaeoglobus fulgidus (strain ATCC 49558 / DSM 4304 / JCM 9628 / NBRC 100126 / VC-16).